The following is a 432-amino-acid chain: Trigger factor (432 aa).

The PPIase FKBP-type domain occupies 161-246; it reads DDRVTIDFVG…LKKIENMVLP (86 aa).

It belongs to the FKBP-type PPIase family. Tig subfamily.

It localises to the cytoplasm. It carries out the reaction [protein]-peptidylproline (omega=180) = [protein]-peptidylproline (omega=0). Its function is as follows. Involved in protein export. Acts as a chaperone by maintaining the newly synthesized protein in an open conformation. Functions as a peptidyl-prolyl cis-trans isomerase. This is Trigger factor from Haemophilus influenzae (strain 86-028NP).